Reading from the N-terminus, the 574-residue chain is Ankyrin repeat protein B18 (574 aa).

ANK repeat units follow at residues threonine 56–methionine 87, isoleucine 135–phenylalanine 164, aspartate 167–alanine 213, cysteine 217–isoleucine 249, histidine 253–glutamate 285, and glutamate 327–alanine 356. The F-box domain occupies asparagine 541 to valine 574.

The protein is Ankyrin repeat protein B18 of Homo sapiens (Human).